Here is a 536-residue protein sequence, read N- to C-terminus: Putative ATP-dependent RNA helicase L364 (536 aa).

The region spanning 47–214 (ISILLKYFLV…IPFYLMNFIP (168 aa)) is the Helicase ATP-binding domain. Position 60 to 67 (60 to 67 (SDTGVGKT)) interacts with ATP. Residues 160–163 (DESH) carry the DEAH box motif. Residues 288–334 (LSDDSDKIAEAYEEIAELMRELEEKKTQCKNHLAKIQKLKQEIELRK) are a coiled coil. The 149-residue stretch at 338 to 486 (FIEQTQLYLE…ISAINDGDLE (149 aa)) folds into the Helicase C-terminal domain. The segment at 502 to 536 (VLNEPVNNPIEEPVNDPVKDPVEDLTDNQPNIVEV) is disordered.

The protein belongs to the DEAD box helicase family. DEAH subfamily.

The catalysed reaction is ATP + H2O = ADP + phosphate + H(+). This chain is Putative ATP-dependent RNA helicase L364, found in Acanthamoeba polyphaga (Amoeba).